Here is a 294-residue protein sequence, read N- to C-terminus: 33 kDa chaperonin (294 aa).

2 cysteine pairs are disulfide-bonded: Cys-239/Cys-241 and Cys-272/Cys-275.

This sequence belongs to the HSP33 family. Post-translationally, under oxidizing conditions two disulfide bonds are formed involving the reactive cysteines. Under reducing conditions zinc is bound to the reactive cysteines and the protein is inactive.

The protein localises to the cytoplasm. Functionally, redox regulated molecular chaperone. Protects both thermally unfolding and oxidatively damaged proteins from irreversible aggregation. Plays an important role in the bacterial defense system toward oxidative stress. This Listeria monocytogenes serovar 1/2a (strain ATCC BAA-679 / EGD-e) protein is 33 kDa chaperonin.